The sequence spans 621 residues: Probable potassium transport system protein Kup 2 (621 aa).

The next 12 membrane-spanning stretches (helical) occupy residues 9 to 29, 48 to 68, 101 to 121, 136 to 156, 164 to 184, 210 to 230, 246 to 266, 275 to 295, 336 to 356, 364 to 384, 393 to 413, and 418 to 438; these read MAGLTLAALGVVYGDIGTSPL, IFGILSLIFWSLIFVVSVKYV, IVLLGLFGAALFYGDAIITPA, SGMEAYVLPMAVGVLVGLFLL, VGLMFGPVMMVWFAILGILGL, GFHAFLTLGSVVLALTGAEAL, WFSLVLPGLGLNYFGQGALLM, PFFLLAPDWALLPMIALATLA, IYMPFINWALLVAVLVVVLTF, AAYGIAVTGTMLITTMLFFVV, LPLALGITLLFGVIDTAFFAA, and VADGGWLPLVMGMAIFTLMST.

The protein belongs to the HAK/KUP transporter (TC 2.A.72) family.

The protein localises to the cell inner membrane. It carries out the reaction K(+)(in) + H(+)(in) = K(+)(out) + H(+)(out). Its function is as follows. Transport of potassium into the cell. Likely operates as a K(+):H(+) symporter. The protein is Probable potassium transport system protein Kup 2 of Chromobacterium violaceum (strain ATCC 12472 / DSM 30191 / JCM 1249 / CCUG 213 / NBRC 12614 / NCIMB 9131 / NCTC 9757 / MK).